Consider the following 291-residue polypeptide: Phosphatidylglycerol--prolipoprotein diacylglyceryl transferase (291 aa).

4 helical membrane-spanning segments follow: residues 24 to 44 (WYALAYIGGIMLGWLYARALL), 64 to 84 (FILWVTIAIIVGGRVGYVLFY), 100 to 120 (WNGGMSFHGGFMGCVAAVILF), and 125 to 145 (GLPILSLGDVATAVGPIGLFL). Residue Arg147 coordinates a 1,2-diacyl-sn-glycero-3-phospho-(1'-sn-glycerol). The next 3 membrane-spanning stretches (helical) occupy residues 187–207 (AALEGILLFTILALMIRLGAL), 211–231 (GLVLGSFIALYAMARIVAEFF), and 247–267 (MGMLLSIPMVIIGLAIVYAAW).

Belongs to the Lgt family.

The protein resides in the cell inner membrane. It carries out the reaction L-cysteinyl-[prolipoprotein] + a 1,2-diacyl-sn-glycero-3-phospho-(1'-sn-glycerol) = an S-1,2-diacyl-sn-glyceryl-L-cysteinyl-[prolipoprotein] + sn-glycerol 1-phosphate + H(+). It functions in the pathway protein modification; lipoprotein biosynthesis (diacylglyceryl transfer). Functionally, catalyzes the transfer of the diacylglyceryl group from phosphatidylglycerol to the sulfhydryl group of the N-terminal cysteine of a prolipoprotein, the first step in the formation of mature lipoproteins. The chain is Phosphatidylglycerol--prolipoprotein diacylglyceryl transferase from Nitrobacter winogradskyi (strain ATCC 25391 / DSM 10237 / CIP 104748 / NCIMB 11846 / Nb-255).